A 361-amino-acid polypeptide reads, in one-letter code: Phosphoserine aminotransferase (361 aa).

R43 is a binding site for L-glutamate. Pyridoxal 5'-phosphate contacts are provided by residues 77-78 (AS), W103, T153, D173, and Q196. Residue K197 is modified to N6-(pyridoxal phosphate)lysine. Residue 238 to 239 (NT) coordinates pyridoxal 5'-phosphate.

It belongs to the class-V pyridoxal-phosphate-dependent aminotransferase family. SerC subfamily. In terms of assembly, homodimer. Pyridoxal 5'-phosphate serves as cofactor.

Its subcellular location is the cytoplasm. The catalysed reaction is O-phospho-L-serine + 2-oxoglutarate = 3-phosphooxypyruvate + L-glutamate. The enzyme catalyses 4-(phosphooxy)-L-threonine + 2-oxoglutarate = (R)-3-hydroxy-2-oxo-4-phosphooxybutanoate + L-glutamate. Its pathway is amino-acid biosynthesis; L-serine biosynthesis; L-serine from 3-phospho-D-glycerate: step 2/3. It participates in cofactor biosynthesis; pyridoxine 5'-phosphate biosynthesis; pyridoxine 5'-phosphate from D-erythrose 4-phosphate: step 3/5. Its function is as follows. Catalyzes the reversible conversion of 3-phosphohydroxypyruvate to phosphoserine and of 3-hydroxy-2-oxo-4-phosphonooxybutanoate to phosphohydroxythreonine. The polypeptide is Phosphoserine aminotransferase (Pseudomonas putida (strain ATCC 47054 / DSM 6125 / CFBP 8728 / NCIMB 11950 / KT2440)).